Reading from the N-terminus, the 776-residue chain is DNA ligase (776 aa).

Residues Asp-31 to Asp-35, Ser-80 to Leu-81, and Glu-112 contribute to the NAD(+) site. Catalysis depends on Lys-114, which acts as the N6-AMP-lysine intermediate. NAD(+)-binding residues include Arg-135, Glu-172, Lys-288, and Lys-312. Zn(2+) is bound by residues Cys-406, Cys-409, Cys-436, and Cys-442. Positions Ala-693–Val-776 constitute a BRCT domain.

The protein belongs to the NAD-dependent DNA ligase family. LigA subfamily. The cofactor is Mg(2+). It depends on Mn(2+) as a cofactor.

It carries out the reaction NAD(+) + (deoxyribonucleotide)n-3'-hydroxyl + 5'-phospho-(deoxyribonucleotide)m = (deoxyribonucleotide)n+m + AMP + beta-nicotinamide D-nucleotide.. Its function is as follows. DNA ligase that catalyzes the formation of phosphodiester linkages between 5'-phosphoryl and 3'-hydroxyl groups in double-stranded DNA using NAD as a coenzyme and as the energy source for the reaction. It is essential for DNA replication and repair of damaged DNA. This Pseudomonas putida (strain ATCC 700007 / DSM 6899 / JCM 31910 / BCRC 17059 / LMG 24140 / F1) protein is DNA ligase.